A 37-amino-acid polypeptide reads, in one-letter code: Large ribosomal subunit protein bL36c (37 aa).

The protein belongs to the bacterial ribosomal protein bL36 family.

Its subcellular location is the plastid. The protein localises to the chloroplast. The protein is Large ribosomal subunit protein bL36c of Pelargonium hortorum (Common geranium).